The sequence spans 119 residues: Large ribosomal subunit protein uL24 (119 aa).

The protein belongs to the universal ribosomal protein uL24 family. In terms of assembly, part of the 50S ribosomal subunit.

Its function is as follows. One of two assembly initiator proteins, it binds directly to the 5'-end of the 23S rRNA, where it nucleates assembly of the 50S subunit. One of the proteins that surrounds the polypeptide exit tunnel on the outside of the subunit. This Leifsonia xyli subsp. xyli (strain CTCB07) protein is Large ribosomal subunit protein uL24.